We begin with the raw amino-acid sequence, 868 residues long: Alanine--tRNA ligase (868 aa).

Histidine 555, histidine 559, cysteine 657, and histidine 661 together coordinate Zn(2+). The segment at 828 to 847 (SQVGGKGGGRPDMAQAGGSE) is disordered.

Belongs to the class-II aminoacyl-tRNA synthetase family. Requires Zn(2+) as cofactor.

It localises to the cytoplasm. The enzyme catalyses tRNA(Ala) + L-alanine + ATP = L-alanyl-tRNA(Ala) + AMP + diphosphate. Catalyzes the attachment of alanine to tRNA(Ala) in a two-step reaction: alanine is first activated by ATP to form Ala-AMP and then transferred to the acceptor end of tRNA(Ala). Also edits incorrectly charged Ser-tRNA(Ala) and Gly-tRNA(Ala) via its editing domain. The protein is Alanine--tRNA ligase of Pseudoalteromonas translucida (strain TAC 125).